We begin with the raw amino-acid sequence, 618 residues long: DNA mismatch repair protein MutL (618 aa).

A compositionally biased stretch (polar residues) spans 348 to 359 (QTDTARSPTGNF). A disordered region spans residues 348–400 (QTDTARSPTGNFESGEVFDYPKSQLQPSHSVSSGGASLGSRSAGGSGGAYRAT). A compositionally biased stretch (low complexity) spans 377–388 (SVSSGGASLGSR).

The protein belongs to the DNA mismatch repair MutL/HexB family.

In terms of biological role, this protein is involved in the repair of mismatches in DNA. It is required for dam-dependent methyl-directed DNA mismatch repair. May act as a 'molecular matchmaker', a protein that promotes the formation of a stable complex between two or more DNA-binding proteins in an ATP-dependent manner without itself being part of a final effector complex. This chain is DNA mismatch repair protein MutL, found in Pseudoalteromonas translucida (strain TAC 125).